A 74-amino-acid chain; its full sequence is Defensin-like protein 39 (74 aa).

A signal peptide spans 1–28 (MEKKSLAALSFLLLLVLFVAQEIVVTEA). 4 cysteine pairs are disulfide-bonded: cysteine 31–cysteine 74, cysteine 42–cysteine 63, cysteine 48–cysteine 68, and cysteine 52–cysteine 70.

Belongs to the DEFL family. As to expression, pods.

It is found in the secreted. Functionally, possesses antifungal activity. This is Defensin-like protein 39 (PI39) from Pisum sativum (Garden pea).